We begin with the raw amino-acid sequence, 307 residues long: Protein TIPIN homolog (307 aa).

Disordered stretches follow at residues 1 to 50 (MASL…SQDA) and 252 to 279 (ASMD…LSNE). Positions 262 to 271 (PLPPSQPPTP) are enriched in pro residues.

This sequence belongs to the CSM3 family.

It is found in the cytoplasm. Its subcellular location is the nucleus. In terms of biological role, required for normal progression of S-phase. Important for cell survival after DNA damage or replication stress. The chain is Protein TIPIN homolog from Drosophila melanogaster (Fruit fly).